A 260-amino-acid chain; its full sequence is Hydroxyethylthiazole kinase 1 (260 aa).

Residue M39 participates in substrate binding. The ATP site is built by R115 and T160. Residue G187 participates in substrate binding.

It belongs to the Thz kinase family. Requires Mg(2+) as cofactor.

The enzyme catalyses 5-(2-hydroxyethyl)-4-methylthiazole + ATP = 4-methyl-5-(2-phosphooxyethyl)-thiazole + ADP + H(+). It functions in the pathway cofactor biosynthesis; thiamine diphosphate biosynthesis; 4-methyl-5-(2-phosphoethyl)-thiazole from 5-(2-hydroxyethyl)-4-methylthiazole: step 1/1. Catalyzes the phosphorylation of the hydroxyl group of 4-methyl-5-beta-hydroxyethylthiazole (THZ). The polypeptide is Hydroxyethylthiazole kinase 1 (Streptococcus pneumoniae (strain JJA)).